The chain runs to 105 residues: Ferredoxin-2 (105 aa).

In terms of domain architecture, 2Fe-2S ferredoxin-type spans 4 to 94 (YQVEVIYQGQ…DLKIETHKED (91 aa)). [2Fe-2S] cluster contacts are provided by C40, C45, C48, and C78.

The protein belongs to the 2Fe2S plant-type ferredoxin family. As to quaternary structure, forms a complex with heterodimeric ferredoxin-thioredoxin reductase (FTR) and thioredoxin. It depends on [2Fe-2S] cluster as a cofactor.

Ferredoxins are iron-sulfur proteins that transfer electrons in a wide variety of metabolic reactions. The sequence is that of Ferredoxin-2 (petF2) from Synechococcus sp. (strain ATCC 27144 / PCC 6301 / SAUG 1402/1) (Anacystis nidulans).